The primary structure comprises 370 residues: Phenylalanine dehydrogenase (370 aa).

Arg44 is a binding site for NAD(+). L-phenylalanine is bound at residue Lys68. Catalysis depends on Lys80, which acts as the Proton donor/acceptor. 114-115 (TD) lines the L-phenylalanine pocket. Residues Asp115, Ser146, Thr150, 180-186 (GLGKVGF), 203-204 (DV), 243-244 (AI), and 264-266 (AAN) contribute to the NAD(+) site. Asn266 is an L-phenylalanine binding site.

The protein belongs to the Glu/Leu/Phe/Val dehydrogenases family.

It catalyses the reaction L-phenylalanine + NAD(+) + H2O = 3-phenylpyruvate + NH4(+) + NADH + H(+). It functions in the pathway amino-acid biosynthesis; L-phenylalanine biosynthesis; L-phenylalanine from phenylpyruvate (PDH route): step 1/1. Functionally, catalyzes the reversible NAD(+)-dependent oxidative deamination of L-phenylalanine to phenylpyruvate. This is Phenylalanine dehydrogenase from Caldalkalibacillus thermarum (strain TA2.A1).